The sequence spans 1056 residues: Outer capsid protein VP5 (1056 aa).

It belongs to the orthoreovirus lambda-2 protein family.

It localises to the virion. The catalysed reaction is a 5'-end diphospho-ribonucleoside in mRNA + GTP + H(+) = a 5'-end (5'-triphosphoguanosine)-ribonucleoside in mRNA + diphosphate. The enzyme catalyses a 5'-end (5'-triphosphoguanosine)-ribonucleoside in mRNA + S-adenosyl-L-methionine = a 5'-end (N(7)-methyl 5'-triphosphoguanosine)-ribonucleoside in mRNA + S-adenosyl-L-homocysteine. Functionally, outer capsid protein involved in mRNA capping. Catalyzes the last 3 enzymatic activities for formation of the 5' cap structure on the viral plus-strand transcripts, namely the RNA guanylyltransferase, RNA-7N- and RNA-2'O-methyltransferase activities. The sequence is that of Outer capsid protein VP5 (S5) from Aedes pseudoscutellaris reovirus (isolate France) (ApRV).